The primary structure comprises 445 residues: MEKIKVALVSLGCDKNRIDSELMLYKLNEEAELVKDPKEAQVIIVNTCGFIETAKEESINTILQMASYKKTHNCKVLVVTGCLTQRYKGELKELIPEMDIMLGVNDYDKLLESIKVFLKSGEKSFYHKYSDTKINEGNRILTTPTYTAYVRIAEGCNNFCTYCAIPRIRGKYRSRKKENILKEVENLAKQGVKEIILIAQDTTMYGIDIYGKKVLHELLRDISKVEGVKWIRLLYCYPEEITKELIEEIKNNDKVCKYLDLPIQQISNSVLKRMGRKTTKETIINIIKKLRKEIEGITLRTSLIVGFPGETEGEFSELKEFVSDVKLDKLGVFKYSKEEGTSAALMEEQIDEEIKEKREEEIMILQQSISKDINKEKIGKTYEVIVEGTKEDMYYGRNYEMSPEIDGEIYFEKDENVKIGDIIKVKVTHSLEYDLIGVVYNELSK.

Positions 4–119 (IKVALVSLGC…LLESIKVFLK (116 aa)) constitute an MTTase N-terminal domain. Cys13, Cys48, Cys82, Cys156, Cys160, and Cys163 together coordinate [4Fe-4S] cluster. The Radical SAM core domain maps to 142-372 (TTPTYTAYVR…MILQQSISKD (231 aa)). Residues 375–441 (KEKIGKTYEV…EYDLIGVVYN (67 aa)) form the TRAM domain.

This sequence belongs to the methylthiotransferase family. RimO subfamily. Requires [4Fe-4S] cluster as cofactor.

The protein resides in the cytoplasm. The catalysed reaction is L-aspartate(89)-[ribosomal protein uS12]-hydrogen + (sulfur carrier)-SH + AH2 + 2 S-adenosyl-L-methionine = 3-methylsulfanyl-L-aspartate(89)-[ribosomal protein uS12]-hydrogen + (sulfur carrier)-H + 5'-deoxyadenosine + L-methionine + A + S-adenosyl-L-homocysteine + 2 H(+). In terms of biological role, catalyzes the methylthiolation of an aspartic acid residue of ribosomal protein uS12. The sequence is that of Ribosomal protein uS12 methylthiotransferase RimO from Clostridium botulinum (strain ATCC 19397 / Type A).